A 157-amino-acid chain; its full sequence is DNA gyrase inhibitor (157 aa).

This sequence belongs to the DNA gyrase inhibitor family. In terms of assembly, interacts with DNA gyrase.

The protein localises to the cytoplasm. Its function is as follows. Inhibits the supercoiling activity of DNA gyrase. Acts by inhibiting DNA gyrase at an early step, prior to (or at the step of) binding of DNA by the gyrase. It protects cells against toxins that target DNA gyrase, by inhibiting activity of these toxins and reducing the formation of lethal double-strand breaks in the cell. The chain is DNA gyrase inhibitor from Cronobacter sakazakii (strain ATCC BAA-894) (Enterobacter sakazakii).